The following is a 602-amino-acid chain: Aspartate--tRNA(Asp/Asn) ligase (602 aa).

An L-aspartate-binding site is contributed by Glu170. An aspartate region spans residues 194 to 197 (QLFK). Arg216 contacts L-aspartate. Residues 216–218 (RDE) and Gln225 contribute to the ATP site. His448 is an L-aspartate binding site. Residue Glu482 coordinates ATP. An L-aspartate-binding site is contributed by Arg489. Residue 534–537 (GWDR) coordinates ATP. Residues 559–602 (GGVDPLTNAPAPITAQQRKESGVDAKPEPKGDAASAKPDAPADK) are disordered. The span at 575 to 589 (QRKESGVDAKPEPKG) shows a compositional bias: basic and acidic residues. A compositionally biased stretch (low complexity) spans 590-602 (DAASAKPDAPADK).

Belongs to the class-II aminoacyl-tRNA synthetase family. Type 1 subfamily. As to quaternary structure, homodimer.

The protein localises to the cytoplasm. The enzyme catalyses tRNA(Asx) + L-aspartate + ATP = L-aspartyl-tRNA(Asx) + AMP + diphosphate. Aspartyl-tRNA synthetase with relaxed tRNA specificity since it is able to aspartylate not only its cognate tRNA(Asp) but also tRNA(Asn). Reaction proceeds in two steps: L-aspartate is first activated by ATP to form Asp-AMP and then transferred to the acceptor end of tRNA(Asp/Asn). This is Aspartate--tRNA(Asp/Asn) ligase from Rhodococcus jostii (strain RHA1).